The sequence spans 246 residues: Bis(5'-nucleosyl)-tetraphosphatase PrpE [asymmetrical] (246 aa).

This sequence belongs to the PrpE family. Ni(2+) serves as cofactor.

The catalysed reaction is P(1),P(4)-bis(5'-guanosyl) tetraphosphate + H2O = GMP + GTP + 2 H(+). Its function is as follows. Asymmetrically hydrolyzes Ap4p to yield AMP and ATP. This is Bis(5'-nucleosyl)-tetraphosphatase PrpE [asymmetrical] from Bacillus thuringiensis (strain Al Hakam).